A 258-amino-acid chain; its full sequence is Imidazole glycerol phosphate synthase subunit HisF (258 aa).

Residues Asp-11 and Asp-130 contribute to the active site.

The protein belongs to the HisA/HisF family. As to quaternary structure, heterodimer of HisH and HisF.

It is found in the cytoplasm. It carries out the reaction 5-[(5-phospho-1-deoxy-D-ribulos-1-ylimino)methylamino]-1-(5-phospho-beta-D-ribosyl)imidazole-4-carboxamide + L-glutamine = D-erythro-1-(imidazol-4-yl)glycerol 3-phosphate + 5-amino-1-(5-phospho-beta-D-ribosyl)imidazole-4-carboxamide + L-glutamate + H(+). The protein operates within amino-acid biosynthesis; L-histidine biosynthesis; L-histidine from 5-phospho-alpha-D-ribose 1-diphosphate: step 5/9. Functionally, IGPS catalyzes the conversion of PRFAR and glutamine to IGP, AICAR and glutamate. The HisF subunit catalyzes the cyclization activity that produces IGP and AICAR from PRFAR using the ammonia provided by the HisH subunit. The polypeptide is Imidazole glycerol phosphate synthase subunit HisF (Bradyrhizobium sp. (strain ORS 278)).